Reading from the N-terminus, the 701-residue chain is Polyribonucleotide nucleotidyltransferase (701 aa).

Mg(2+) contacts are provided by Asp-485 and Asp-491. The 60-residue stretch at 552–611 (PKTQIMSINPDKIRDVIGAGGKVINKIIQDTGVKIDIKEDGTVFVSSTDHNGVNEAIKII) folds into the KH domain. In terms of domain architecture, S1 motif spans 621-689 (GEVYLGKVTK…NQGRINLSRK (69 aa)).

This sequence belongs to the polyribonucleotide nucleotidyltransferase family. It depends on Mg(2+) as a cofactor.

The protein localises to the cytoplasm. The enzyme catalyses RNA(n+1) + phosphate = RNA(n) + a ribonucleoside 5'-diphosphate. Involved in mRNA degradation. Catalyzes the phosphorolysis of single-stranded polyribonucleotides processively in the 3'- to 5'-direction. In Clostridium beijerinckii (strain ATCC 51743 / NCIMB 8052) (Clostridium acetobutylicum), this protein is Polyribonucleotide nucleotidyltransferase.